The following is a 1138-amino-acid chain: Ras guanine nucleotide exchange factor N (1138 aa).

LRR repeat units follow at residues Met-1–Leu-16, His-18–Gly-39, and Thr-43–Leu-64. Disordered regions lie at residues Ala-126–Asn-180, Phe-239–Lys-301, Asn-319–Asn-360, Ile-389–Gln-411, Gly-473–Asn-540, Ala-601–Ser-643, and Met-660–Gly-680. Residues Lys-140–Thr-158 are compositionally biased toward low complexity. The segment covering Arg-263–Ile-275 has biased composition (polar residues). Residues Ser-283–Ser-299 show a composition bias toward gly residues. A compositionally biased stretch (low complexity) spans Gly-326–Ile-352. Basic and acidic residues predominate over residues Arg-393 to Ile-405. Residues Pro-487–Ile-496 show a composition bias toward pro residues. The segment covering Asp-498–Ile-511 has biased composition (polar residues). 2 stretches are compositionally biased toward low complexity: residues Asn-512 to Asn-540 and Asn-605 to Gln-634. Residues Gly-733–Arg-855 enclose the N-terminal Ras-GEF domain. The Ras-GEF domain occupies Arg-891–Lys-1118.

Functionally, promotes the exchange of Ras-bound GDP by GTP. May play a role in chemotaxis. In Dictyostelium discoideum (Social amoeba), this protein is Ras guanine nucleotide exchange factor N (gefN).